A 91-amino-acid polypeptide reads, in one-letter code: MSSQVNTTRDSRRKILQGIVVSDKMQKTIVVQVERKSKHRLYKKLVITHKKYHAHDEKEECKIGDFVEIMETRPLSATKRWRLNKIIQKAK.

The protein belongs to the universal ribosomal protein uS17 family. Part of the 30S ribosomal subunit.

One of the primary rRNA binding proteins, it binds specifically to the 5'-end of 16S ribosomal RNA. The protein is Small ribosomal subunit protein uS17 of Malacoplasma penetrans (strain HF-2) (Mycoplasma penetrans).